The chain runs to 172 residues: Envelope protein UL45 (172 aa).

Over 1 to 27 (MPLRASEHAYRPLGPGTPPMRARLPAA) the chain is Intravirion. The chain crosses the membrane as a helical; Signal-anchor for type II membrane protein span at residues 28–48 (AWVGVGTIIGGVVIIAALVLV). Topologically, residues 49-172 (PSRASWALSP…TSTRNALGLP (124 aa)) are virion surface.

Belongs to the herpesviridae HHV-1 UL45 family.

It localises to the virion membrane. Functionally, important virulence factor of HSV neurotropism. Seems to be required for glycoprotein B-induced fusion. Dispensable for growth in vitro. The chain is Envelope protein UL45 from Human herpesvirus 1 (strain 17) (HHV-1).